A 460-amino-acid chain; its full sequence is Adenylosuccinate lyase (460 aa).

N(6)-(1,2-dicarboxyethyl)-AMP-binding positions include Arg15–Tyr16, Asn88–Asp90, and Thr120–Ser121. Catalysis depends on His169, which acts as the Proton donor/acceptor. Gln245 is a N(6)-(1,2-dicarboxyethyl)-AMP binding site. Ser293 functions as the Proton donor/acceptor in the catalytic mechanism. N(6)-(1,2-dicarboxyethyl)-AMP-binding positions include Ser294, Lys299 to Asn301, Asn307, Arg333, and Ser338 to Arg342.

This sequence belongs to the lyase 1 family. Adenylosuccinate lyase subfamily. As to quaternary structure, homotetramer. Residues from neighboring subunits contribute catalytic and substrate-binding residues to each active site.

It catalyses the reaction N(6)-(1,2-dicarboxyethyl)-AMP = fumarate + AMP. The catalysed reaction is (2S)-2-[5-amino-1-(5-phospho-beta-D-ribosyl)imidazole-4-carboxamido]succinate = 5-amino-1-(5-phospho-beta-D-ribosyl)imidazole-4-carboxamide + fumarate. Its pathway is purine metabolism; AMP biosynthesis via de novo pathway; AMP from IMP: step 2/2. It functions in the pathway purine metabolism; IMP biosynthesis via de novo pathway; 5-amino-1-(5-phospho-D-ribosyl)imidazole-4-carboxamide from 5-amino-1-(5-phospho-D-ribosyl)imidazole-4-carboxylate: step 2/2. Functionally, catalyzes two reactions in de novo purine nucleotide biosynthesis. Catalyzes the breakdown of 5-aminoimidazole- (N-succinylocarboxamide) ribotide (SAICAR or 2-[5-amino-1-(5-phospho-beta-D-ribosyl)imidazole-4-carboxamido]succinate) to 5-aminoimidazole-4-carboxamide ribotide (AICAR or 5-amino-1-(5-phospho-beta-D-ribosyl)imidazole-4-carboxamide) and fumarate, and of adenylosuccinate (ADS or N(6)-(1,2-dicarboxyethyl)-AMP) to adenosine monophosphate (AMP) and fumarate. The sequence is that of Adenylosuccinate lyase (purB) from Buchnera aphidicola subsp. Baizongia pistaciae (strain Bp).